A 168-amino-acid chain; its full sequence is Probable chorismate pyruvate-lyase (168 aa).

Positions 75, 114, and 155 each coordinate substrate.

The protein belongs to the UbiC family.

It is found in the cytoplasm. It carries out the reaction chorismate = 4-hydroxybenzoate + pyruvate. The protein operates within cofactor biosynthesis; ubiquinone biosynthesis. In terms of biological role, removes the pyruvyl group from chorismate, with concomitant aromatization of the ring, to provide 4-hydroxybenzoate (4HB) for the ubiquinone pathway. The chain is Probable chorismate pyruvate-lyase from Psychrobacter cryohalolentis (strain ATCC BAA-1226 / DSM 17306 / VKM B-2378 / K5).